A 468-amino-acid chain; its full sequence is UDP-N-acetylmuramate--L-alanine ligase (468 aa).

118–124 (GTHGKTT) provides a ligand contact to ATP.

It belongs to the MurCDEF family.

Its subcellular location is the cytoplasm. It catalyses the reaction UDP-N-acetyl-alpha-D-muramate + L-alanine + ATP = UDP-N-acetyl-alpha-D-muramoyl-L-alanine + ADP + phosphate + H(+). It functions in the pathway cell wall biogenesis; peptidoglycan biosynthesis. Its function is as follows. Cell wall formation. This chain is UDP-N-acetylmuramate--L-alanine ligase, found in Roseobacter denitrificans (strain ATCC 33942 / OCh 114) (Erythrobacter sp. (strain OCh 114)).